We begin with the raw amino-acid sequence, 149 residues long: Hut operon positive regulatory protein (149 aa).

This sequence belongs to the HutP family. As to quaternary structure, homohexamer.

Antiterminator that binds to cis-acting regulatory sequences on the mRNA in the presence of histidine, thereby suppressing transcription termination and activating the hut operon for histidine utilization. The sequence is that of Hut operon positive regulatory protein from Geobacillus sp. (strain WCH70).